The following is a 144-amino-acid chain: MGSKIFLLLGLSIAFAILISSEVAARELAETAAKTEGYNNGGGYHNGGGGYNNGGGYHNGGGGYNNGGGYHNGGGGYNNGGGYHNGGGGYNNGGGHHNGGGGYNNGGGYHGGGGSCYHYCHGRCCSAAEAKALEATTAQVKPQN.

A helical transmembrane segment spans residues 5-25; it reads IFLLLGLSIAFAILISSEVAA. Repeat copies occupy residues 37–42, 43–48, 50–55, 56–61, 63–68, 69–74, 76–81, 82–87, 89–94, 102–107, and 108–113. The segment at 37–113 is 11 X 6 AA tandem repeats of G-Y-[NH]-N-G -G; sequence GYNNGGGYHN…NNGGGYHGGG (77 aa).

It belongs to the GRP family.

The protein localises to the membrane. In Oxybasis rubra (Red goosefoot), this protein is Glycine-rich protein HC1.